The following is a 478-amino-acid chain: Maintenance of telomere capping protein 1 (478 aa).

A disordered region spans residues M1–N153. Composition is skewed to basic and acidic residues over residues T77–P87 and A95–E124. The span at K125–E141 shows a compositional bias: acidic residues. At S273 the chain carries Phosphoserine. Basic and acidic residues-rich tracts occupy residues Q321 to S336 and S421 to E435. Disordered stretches follow at residues Q321–N341 and T416–P448. S436 is subject to Phosphoserine. Over residues S436–D447 the composition is skewed to acidic residues.

It belongs to the MTC1 family. As to quaternary structure, interacts with ribosomes.

It localises to the cytoplasm. The protein localises to the cytoplasmic vesicle. It is found in the COPI-coated vesicle. Functionally, involved in telomere capping. This is Maintenance of telomere capping protein 1 (MTC1) from Saccharomyces cerevisiae (strain ATCC 204508 / S288c) (Baker's yeast).